A 258-amino-acid polypeptide reads, in one-letter code: Proliferating cell nuclear antigen (258 aa).

A DNA-binding region spans residues 61 to 80; it reads NCDRSLSLGLSLVSLSKILK.

This sequence belongs to the PCNA family. Homotrimer. Forms a complex with activator 1 heteropentamer in the presence of ATP.

Its subcellular location is the nucleus. Functionally, this protein is an auxiliary protein of DNA polymerase delta and is involved in the control of eukaryotic DNA replication by increasing the polymerase's processibility during elongation of the leading strand. The chain is Proliferating cell nuclear antigen (pcna) from Dictyostelium discoideum (Social amoeba).